The sequence spans 2027 residues: Citron Rho-interacting kinase (2027 aa).

M1 is modified (N-acetylmethionine). Positions 97 to 360 constitute a Protein kinase domain; it reads FEVRSLVGCG…FEGLCCHPFF (264 aa). ATP is bound by residues 103 to 111 and K126; that span reads VGCGHFAEV. D221 acts as the Proton acceptor in catalysis. The AGC-kinase C-terminal domain occupies 361 to 431; sequence SKIDWNNIRN…SKALGILGRS (71 aa). S433, S440, S480, and S582 each carry phosphoserine. Residues 453–1297 adopt a coiled-coil conformation; it reads IKSKELQDSQ…SAREEAAHRK (845 aa). An interaction with Rho/Rac region spans residues 1091-1302; the sequence is LAVKEHKAEI…AAHRKATDHP (212 aa). At Y1196 the chain carries Phosphotyrosine. Residues 1290 to 1303 show a composition bias toward basic and acidic residues; it reads REEAAHRKATDHPH. Disordered regions lie at residues 1290 to 1310 and 1322 to 1351; these read REEAAHRKATDHPHPSTPATA and SPEHQPSAMSLLAPPSSRRKESSTPEEFSR. Residues 1327–1337 show a composition bias toward low complexity; sequence PSAMSLLAPPS. Residues 1339 to 1351 are compositionally biased toward basic and acidic residues; the sequence is RRKESSTPEEFSR. Residues 1362–1411 form a Phorbol-ester/DAG-type zinc finger; sequence PHRFNVGLNMRATKCAVCLDTVHFGRQASKCLECQVMCHPKCSTCLPATC. The region spanning 1443-1563 is the PH domain; the sequence is SLHLEGWMKV…WVTALESVVA (121 aa). The region spanning 1591–1881 is the CNH domain; sequence RLDMNCTLPF…RYLGPAISSG (291 aa). The residue at position 1721 (K1721) is an N6-acetyllysine. The disordered stretch occupies residues 1905–2012; sequence ESGTEHHRGP…RGRLPAGAVR (108 aa). S1940 bears the Phosphoserine mark. The segment covering 1948 to 2003 has biased composition (basic and acidic residues); that stretch reads SHPREPSTPHRYREGRTELRRDKSPGRPLEREKSPGRMLSTRRERSPGRLFEDSSR. Residues 1953–1958 carry the SH3-binding motif; that stretch reads PSTPHR. S1993 carries the phosphoserine modification. Position 2013 is a phosphothreonine (T2013).

The protein belongs to the protein kinase superfamily. AGC Ser/Thr protein kinase family. As to quaternary structure, directly interacts with KIF14 depending on the activation state (stronger interaction with the kinase-dead form). Homodimer. Interacts with TTC3.

It localises to the cytoplasm. The enzyme catalyses L-seryl-[protein] + ATP = O-phospho-L-seryl-[protein] + ADP + H(+). It carries out the reaction L-threonyl-[protein] + ATP = O-phospho-L-threonyl-[protein] + ADP + H(+). In terms of biological role, plays a role in cytokinesis. Required for KIF14 localization to the central spindle and midbody. Putative RHO/RAC effector that binds to the GTP-bound forms of RHO and RAC1. It probably binds p21 with a tighter specificity in vivo. Displays serine/threonine protein kinase activity. Plays an important role in the regulation of cytokinesis and the development of the central nervous system. Phosphorylates MYL9/MLC2. The sequence is that of Citron Rho-interacting kinase (CIT) from Homo sapiens (Human).